Consider the following 397-residue polypeptide: MGFLKVLATSLATLAVVDAGTLLTASNTDAVIPSSYIVVMNDDVSTAEFSTHREWATNVHARLSRRKNGETGPGKHFEINGLKGYTASFDENTAKDIANDPAVKYIEPDMIVNATANVVQSNVPSWGLARISSKRTGTTSYTYDSTAGEGVVFYGVDTGIDISHSDFGGRAKWGTNVVDNDNTDGNGHGTHTASTAAGSKYGVAKKATLVAVKVLGADGSGTNSGVISGMDWAVKDAKSRGANGKYVMNTSLGGEFSKAVNDAAANVVKSGIFLSVAAGNEAENASNSSPASAAEACTIAASTSTDGSASFTNFGSVVDLYAPGQSITAAYPGGGSKTLSGTSMAAPHVAGVAAYLMALEGVSAGNACARIVQLATSSISRAPSGTTSKLLYNGINV.

Residues methionine 1–alanine 19 form the signal peptide. Positions glycine 20–threonine 115 are cleaved as a propeptide — removed in mature form. Positions serine 35–asparagine 113 constitute an Inhibitor I9 domain. Asparagine 113 is a glycosylation site (N-linked (GlcNAc...) asparagine). The Peptidase S8 domain maps to serine 125 to valine 397. Catalysis depends on charge relay system residues aspartate 157 and histidine 188. N-linked (GlcNAc...) asparagine glycans are attached at residues asparagine 249 and asparagine 284. Serine 343 (charge relay system) is an active-site residue.

Belongs to the peptidase S8 family.

Its subcellular location is the secreted. Its function is as follows. Serine protease. The polypeptide is Subtilisin-like serine protease Pen ch 13.0101 (Penicillium rubens).